Consider the following 472-residue polypeptide: 3-isopropylmalate dehydratase large subunit (472 aa).

Positions 347, 407, and 410 each coordinate [4Fe-4S] cluster.

Belongs to the aconitase/IPM isomerase family. LeuC type 1 subfamily. Heterodimer of LeuC and LeuD. Requires [4Fe-4S] cluster as cofactor.

The enzyme catalyses (2R,3S)-3-isopropylmalate = (2S)-2-isopropylmalate. The protein operates within amino-acid biosynthesis; L-leucine biosynthesis; L-leucine from 3-methyl-2-oxobutanoate: step 2/4. In terms of biological role, catalyzes the isomerization between 2-isopropylmalate and 3-isopropylmalate, via the formation of 2-isopropylmaleate. The protein is 3-isopropylmalate dehydratase large subunit of Bacillus licheniformis (strain ATCC 14580 / DSM 13 / JCM 2505 / CCUG 7422 / NBRC 12200 / NCIMB 9375 / NCTC 10341 / NRRL NRS-1264 / Gibson 46).